A 156-amino-acid polypeptide reads, in one-letter code: Cyanate hydratase (156 aa).

Catalysis depends on residues Arg96, Glu99, and Ser122.

It belongs to the cyanase family.

It catalyses the reaction cyanate + hydrogencarbonate + 3 H(+) = NH4(+) + 2 CO2. Functionally, catalyzes the reaction of cyanate with bicarbonate to produce ammonia and carbon dioxide. The chain is Cyanate hydratase from Serratia proteamaculans (strain 568).